Reading from the N-terminus, the 153-residue chain is NADPH-dependent 7-cyano-7-deazaguanine reductase (153 aa).

The segment at methionine 1–proline 30 is disordered. Cysteine 51 functions as the Thioimide intermediate in the catalytic mechanism. The active-site Proton donor is aspartate 58. Residues valine 73–serine 75 and histidine 92–glutamate 93 contribute to the substrate site.

Belongs to the GTP cyclohydrolase I family. QueF type 1 subfamily.

It is found in the cytoplasm. It carries out the reaction 7-aminomethyl-7-carbaguanine + 2 NADP(+) = 7-cyano-7-deazaguanine + 2 NADPH + 3 H(+). It participates in tRNA modification; tRNA-queuosine biosynthesis. Catalyzes the NADPH-dependent reduction of 7-cyano-7-deazaguanine (preQ0) to 7-aminomethyl-7-deazaguanine (preQ1). This is NADPH-dependent 7-cyano-7-deazaguanine reductase from Methylorubrum extorquens (strain CM4 / NCIMB 13688) (Methylobacterium extorquens).